The chain runs to 252 residues: 5-oxoprolinase subunit A (252 aa).

This sequence belongs to the LamB/PxpA family. Forms a complex composed of PxpA, PxpB and PxpC.

It catalyses the reaction 5-oxo-L-proline + ATP + 2 H2O = L-glutamate + ADP + phosphate + H(+). Its function is as follows. Catalyzes the cleavage of 5-oxoproline to form L-glutamate coupled to the hydrolysis of ATP to ADP and inorganic phosphate. This Corynebacterium glutamicum (strain R) protein is 5-oxoprolinase subunit A.